The chain runs to 552 residues: Cholesterol oxidase (552 aa).

The tat-type signal signal peptide spans 1-45 (MTDSRANRADATRGVASVSRRRFLAGAGLTAGAIALSSMSTSASA). 8 residues coordinate FAD: tyrosine 66, glycine 67, glutamate 86, glycine 160, asparagine 164, glycine 165, methionine 167, and valine 295. Catalysis depends on proton acceptor residues glutamate 406 and histidine 492. FAD-binding residues include glycine 520 and phenylalanine 532.

The protein belongs to the GMC oxidoreductase family. Requires FAD as cofactor. In terms of processing, predicted to be exported by the Tat system. The position of the signal peptide cleavage has been experimentally proven.

Its subcellular location is the secreted. It carries out the reaction cholesterol + O2 = cholest-5-en-3-one + H2O2. The enzyme catalyses cholest-5-en-3-one = cholest-4-en-3-one. Its pathway is steroid metabolism; cholesterol degradation. Functionally, bifunctional enzyme that catalyzes the oxidation and isomerization of cholesterol to cholestenone (cholest-4-en-3-one), an initial step in the cholesterol degradation process. The chain is Cholesterol oxidase from Brevibacterium sterolicum.